Reading from the N-terminus, the 40-residue chain is APLLVELPNGKLRGRDNEGYYEAELIPKADPPVGDLAFKD.

It belongs to the type-B carboxylesterase/lipase family.

It carries out the reaction a carboxylic ester + H2O = an alcohol + a carboxylate + H(+). The polypeptide is Esterase-4 (Est-4) (Drosophila mojavensis (Fruit fly)).